A 58-amino-acid chain; its full sequence is Large ribosomal subunit protein uL30 (58 aa).

This sequence belongs to the universal ribosomal protein uL30 family. Part of the 50S ribosomal subunit.

This chain is Large ribosomal subunit protein uL30, found in Porphyromonas gingivalis (strain ATCC 33277 / DSM 20709 / CIP 103683 / JCM 12257 / NCTC 11834 / 2561).